The sequence spans 540 residues: Chaperonin GroEL 4 (540 aa).

Residues 29–32 (TLGP), 86–90 (DGTTT), Gly413, 477–479 (NAA), and Asp493 contribute to the ATP site.

Belongs to the chaperonin (HSP60) family. Forms a cylinder of 14 subunits composed of two heptameric rings stacked back-to-back. Interacts with the co-chaperonin GroES.

It localises to the cytoplasm. It catalyses the reaction ATP + H2O + a folded polypeptide = ADP + phosphate + an unfolded polypeptide.. Its function is as follows. Together with its co-chaperonin GroES, plays an essential role in assisting protein folding. The GroEL-GroES system forms a nano-cage that allows encapsulation of the non-native substrate proteins and provides a physical environment optimized to promote and accelerate protein folding. The chain is Chaperonin GroEL 4 from Frankia alni (strain DSM 45986 / CECT 9034 / ACN14a).